A 605-amino-acid polypeptide reads, in one-letter code: UvrABC system protein C (605 aa).

The GIY-YIG domain occupies 15–92; it reads GLPGCYLMKN…IQKHQPYFNI (78 aa). Residues 197–232 enclose the UVR domain; it reads GHAKKDLTQRMEKAAADMAYERAGDLRDQIRYIEAT.

The protein belongs to the UvrC family. As to quaternary structure, interacts with UvrB in an incision complex.

It is found in the cytoplasm. In terms of biological role, the UvrABC repair system catalyzes the recognition and processing of DNA lesions. UvrC both incises the 5' and 3' sides of the lesion. The N-terminal half is responsible for the 3' incision and the C-terminal half is responsible for the 5' incision. In Levilactobacillus brevis (strain ATCC 367 / BCRC 12310 / CIP 105137 / JCM 1170 / LMG 11437 / NCIMB 947 / NCTC 947) (Lactobacillus brevis), this protein is UvrABC system protein C.